The sequence spans 266 residues: Protein PAE0875 (266 aa).

Belongs to the CinA family.

This Pyrobaculum aerophilum (strain ATCC 51768 / DSM 7523 / JCM 9630 / CIP 104966 / NBRC 100827 / IM2) protein is Protein PAE0875.